The chain runs to 150 residues: N-alpha-acetyltransferase 30 (150 aa).

The 149-residue stretch at 2–150 (VTIVPYSHQY…DAFRYILYPN (149 aa)) folds into the N-acetyltransferase domain.

It belongs to the acetyltransferase family. MAK3 subfamily.

It is found in the cytoplasm. The protein resides in the nucleus. It catalyses the reaction N-terminal L-methionyl-L-leucyl-[protein] + acetyl-CoA = N-terminal N(alpha)-acetyl-L-methionyl-L-leucyl-[protein] + CoA + H(+). It carries out the reaction N-terminal L-methionyl-L-isoleucyl-[protein] + acetyl-CoA = N-terminal N(alpha)-acetyl-L-methionyl-L-isoleucyl-[protein] + CoA + H(+). The catalysed reaction is N-terminal L-methionyl-L-phenylalanyl-[protein] + acetyl-CoA = N-terminal N(alpha)-acetyl-L-methionyl-L-phenylalanyl-[protein] + CoA + H(+). The enzyme catalyses N-terminal L-methionyl-L-tryptophyl-[protein] + acetyl-CoA = N-terminal N(alpha)-acetyl-L-methionyl-L-tryptophyl-[protein] + CoA + H(+). It catalyses the reaction N-terminal L-methionyl-L-tyrosyl-[protein] + acetyl-CoA = N-terminal N(alpha)-acetyl-L-methionyl-L-tyrosyl-[protein] + CoA + H(+). Catalytic component of the NatC N-terminal acetyltransferase. In Schizosaccharomyces pombe (strain 972 / ATCC 24843) (Fission yeast), this protein is N-alpha-acetyltransferase 30 (naa30).